The primary structure comprises 307 residues: Homoserine O-acetyltransferase (307 aa).

C142 serves as the catalytic Acyl-thioester intermediate. Residues K163 and S192 each coordinate substrate. Catalysis depends on H235, which acts as the Proton acceptor. Residue E237 is part of the active site. R249 is a binding site for substrate.

This sequence belongs to the MetA family.

It localises to the cytoplasm. It catalyses the reaction L-homoserine + acetyl-CoA = O-acetyl-L-homoserine + CoA. The protein operates within amino-acid biosynthesis; L-methionine biosynthesis via de novo pathway; O-acetyl-L-homoserine from L-homoserine: step 1/1. Functionally, transfers an acetyl group from acetyl-CoA to L-homoserine, forming acetyl-L-homoserine. This chain is Homoserine O-acetyltransferase, found in Rhizobium leguminosarum bv. trifolii (strain WSM2304).